Here is a 154-residue protein sequence, read N- to C-terminus: 3-hydroxyacyl-[acyl-carrier-protein] dehydratase FabZ (154 aa).

Histidine 54 is an active-site residue.

This sequence belongs to the thioester dehydratase family. FabZ subfamily.

It is found in the cytoplasm. The enzyme catalyses a (3R)-hydroxyacyl-[ACP] = a (2E)-enoyl-[ACP] + H2O. Its function is as follows. Involved in unsaturated fatty acids biosynthesis. Catalyzes the dehydration of short chain beta-hydroxyacyl-ACPs and long chain saturated and unsaturated beta-hydroxyacyl-ACPs. The sequence is that of 3-hydroxyacyl-[acyl-carrier-protein] dehydratase FabZ from Shewanella baltica (strain OS223).